Consider the following 433-residue polypeptide: MLDIQLLRKDLDGVAKRLADRGYTLDVAAFSALEAERRAIQTRTEELQARRNSLSKQIGAMKGRGEDTSAVMAEVGGIGDEMKASAVKLDEIQARLSELMLEMPNVPHESVPVGRDETENVEVRRWGAPRQFDFDVKDHVDVGTPLGLDFETGAKLSGARFTVLRGPIARLHRALAQFMLDTHTQQHGYSETYTPYIVNPDVLYGTGQLPKFAEDMFRVEKGGAENTVTQYLISTSEISLTNTVRDSIVDASALPIKLTAHSPCFRSEAGSYGRDTRGMIRQHQFDKVEMVQIVAPEASYAALDEMVGHAEAILQTLELPYRVVALCTGDMGFSAAKTFDLEVWLPAQNTYREISSCSNTESFQARRMQARFRNAQGKPELVHTLNGSGLAVGRTLVAVLENYQNADGSVTVPVALRPYMGGVERIAAPSSAA.

L-serine is bound at residue 235–237 (TSE). 266 to 268 (RSE) provides a ligand contact to ATP. Position 289 (Glu-289) interacts with L-serine. 353–356 (EISS) lines the ATP pocket. Ser-388 contributes to the L-serine binding site.

This sequence belongs to the class-II aminoacyl-tRNA synthetase family. Type-1 seryl-tRNA synthetase subfamily. As to quaternary structure, homodimer. The tRNA molecule binds across the dimer.

It localises to the cytoplasm. The catalysed reaction is tRNA(Ser) + L-serine + ATP = L-seryl-tRNA(Ser) + AMP + diphosphate + H(+). It catalyses the reaction tRNA(Sec) + L-serine + ATP = L-seryl-tRNA(Sec) + AMP + diphosphate + H(+). Its pathway is aminoacyl-tRNA biosynthesis; selenocysteinyl-tRNA(Sec) biosynthesis; L-seryl-tRNA(Sec) from L-serine and tRNA(Sec): step 1/1. Catalyzes the attachment of serine to tRNA(Ser). Is also able to aminoacylate tRNA(Sec) with serine, to form the misacylated tRNA L-seryl-tRNA(Sec), which will be further converted into selenocysteinyl-tRNA(Sec). This chain is Serine--tRNA ligase, found in Burkholderia thailandensis (strain ATCC 700388 / DSM 13276 / CCUG 48851 / CIP 106301 / E264).